We begin with the raw amino-acid sequence, 312 residues long: Ribosomal RNA small subunit methyltransferase H (312 aa).

Residues 32–34 (AGH), Asp52, Phe79, Asp100, and Gln107 each bind S-adenosyl-L-methionine.

This sequence belongs to the methyltransferase superfamily. RsmH family.

It localises to the cytoplasm. It catalyses the reaction cytidine(1402) in 16S rRNA + S-adenosyl-L-methionine = N(4)-methylcytidine(1402) in 16S rRNA + S-adenosyl-L-homocysteine + H(+). Functionally, specifically methylates the N4 position of cytidine in position 1402 (C1402) of 16S rRNA. The polypeptide is Ribosomal RNA small subunit methyltransferase H (Listeria monocytogenes serotype 4b (strain F2365)).